A 438-amino-acid chain; its full sequence is tRNA modification GTPase MnmE (438 aa).

(6S)-5-formyl-5,6,7,8-tetrahydrofolate-binding residues include R19, E76, and K115. The region spanning 211–363 is the TrmE-type G domain; the sequence is GYKVAIIGRP…LSKELESYLN (153 aa). GTP-binding positions include 221–226, 240–246, and 265–268; these read NVGKSS, SETAGTT, and DTAG. 2 residues coordinate Mg(2+): S225 and T246. Residue K438 coordinates (6S)-5-formyl-5,6,7,8-tetrahydrofolate.

It belongs to the TRAFAC class TrmE-Era-EngA-EngB-Septin-like GTPase superfamily. TrmE GTPase family. As to quaternary structure, homodimer. Heterotetramer of two MnmE and two MnmG subunits. K(+) is required as a cofactor.

The protein localises to the cytoplasm. In terms of biological role, exhibits a very high intrinsic GTPase hydrolysis rate. Involved in the addition of a carboxymethylaminomethyl (cmnm) group at the wobble position (U34) of certain tRNAs, forming tRNA-cmnm(5)s(2)U34. This chain is tRNA modification GTPase MnmE, found in Campylobacter fetus subsp. fetus (strain 82-40).